A 911-amino-acid chain; its full sequence is Valine--tRNA ligase (911 aa).

The short motif at 57 to 67 is the 'HIGH' region element; that stretch reads PTVSGSLHVGH. The short motif at 599–603 is the 'KMSKS' region element; sequence KMSKS. An ATP-binding site is contributed by Lys-602. The interval 882–911 is disordered; it reads EESAAEDAPETEVAVEASELGEPPVKKPKH.

It belongs to the class-I aminoacyl-tRNA synthetase family. ValS type 2 subfamily. As to quaternary structure, monomer.

It is found in the cytoplasm. The enzyme catalyses tRNA(Val) + L-valine + ATP = L-valyl-tRNA(Val) + AMP + diphosphate. In terms of biological role, catalyzes the attachment of valine to tRNA(Val). As ValRS can inadvertently accommodate and process structurally similar amino acids such as threonine, to avoid such errors, it has a 'posttransfer' editing activity that hydrolyzes mischarged Thr-tRNA(Val) in a tRNA-dependent manner. The polypeptide is Valine--tRNA ligase (Bifidobacterium longum subsp. infantis (strain ATCC 15697 / DSM 20088 / JCM 1222 / NCTC 11817 / S12)).